The following is a 431-amino-acid chain: 3-deoxy-D-manno-octulosonic acid transferase (431 aa).

Residues 5–27 (WLTSRLYDAFLVCAFFVSAPRIF) traverse the membrane as a helical; Signal-anchor segment. The Proton acceptor role is filled by Glu67. Residues 275-276 (PR), 315-317 (MGV), and 342-345 (NLLE) each bind CMP.

This sequence belongs to the glycosyltransferase group 1 family. Glycosyltransferase 30 subfamily.

Its subcellular location is the cell inner membrane. The catalysed reaction is lipid IVA (E. coli) + CMP-3-deoxy-beta-D-manno-octulosonate = alpha-Kdo-(2-&gt;6)-lipid IVA (E. coli) + CMP + H(+). It catalyses the reaction alpha-Kdo-(2-&gt;6)-lipid IVA (E. coli) + CMP-3-deoxy-beta-D-manno-octulosonate = alpha-Kdo-(2-&gt;4)-alpha-Kdo-(2-&gt;6)-lipid IVA (E. coli) + CMP + H(+). The enzyme catalyses alpha-Kdo-(2-&gt;4)-alpha-Kdo-(2-&gt;6)-lipid IVA (E. coli) + CMP-3-deoxy-beta-D-manno-octulosonate = alpha-Kdo-(2-&gt;8)-alpha-Kdo-(2-&gt;4)-alpha-Kdo-(2-&gt;6)-lipid IVA (E. coli) + CMP + H(+). It participates in bacterial outer membrane biogenesis; LPS core biosynthesis. Involved in lipopolysaccharide (LPS) biosynthesis. Catalyzes the transfer of three 3-deoxy-D-manno-octulosonate (Kdo) residues from CMP-Kdo to lipid IV(A), the tetraacyldisaccharide-1,4'-bisphosphate precursor of lipid A. Thus generates the genus-specific LPS epitope of Chlamydia, composed of the trisaccharide alpha-Kdo-(2-&gt;8)-alpha-Kdo-(2-&gt;4)-alpha-Kdo. The polypeptide is 3-deoxy-D-manno-octulosonic acid transferase (waaA) (Chlamydia trachomatis serovar A (strain ATCC VR-571B / DSM 19440 / HAR-13)).